Here is a 295-residue protein sequence, read N- to C-terminus: Bifunctional protein FolD (295 aa).

Residues 166–168, S191, and I232 each bind NADP(+); that span reads GRS.

This sequence belongs to the tetrahydrofolate dehydrogenase/cyclohydrolase family. Homodimer.

It catalyses the reaction (6R)-5,10-methylene-5,6,7,8-tetrahydrofolate + NADP(+) = (6R)-5,10-methenyltetrahydrofolate + NADPH. It carries out the reaction (6R)-5,10-methenyltetrahydrofolate + H2O = (6R)-10-formyltetrahydrofolate + H(+). It functions in the pathway one-carbon metabolism; tetrahydrofolate interconversion. Functionally, catalyzes the oxidation of 5,10-methylenetetrahydrofolate to 5,10-methenyltetrahydrofolate and then the hydrolysis of 5,10-methenyltetrahydrofolate to 10-formyltetrahydrofolate. The sequence is that of Bifunctional protein FolD from Wolbachia pipientis subsp. Culex pipiens (strain wPip).